A 424-amino-acid polypeptide reads, in one-letter code: Phosphoribosylamine--glycine ligase (424 aa).

The 207-residue stretch at 107-313 (KTFMKKYGIP…FLETLLNFYE (207 aa)) folds into the ATP-grasp domain. Position 133 to 194 (133 to 194 (VEKVGAPIVV…EEFLEGEEAS (62 aa))) interacts with ATP. Positions 283 and 285 each coordinate Mg(2+).

Belongs to the GARS family. Requires Mg(2+) as cofactor. Mn(2+) serves as cofactor.

The enzyme catalyses 5-phospho-beta-D-ribosylamine + glycine + ATP = N(1)-(5-phospho-beta-D-ribosyl)glycinamide + ADP + phosphate + H(+). It participates in purine metabolism; IMP biosynthesis via de novo pathway; N(1)-(5-phospho-D-ribosyl)glycinamide from 5-phospho-alpha-D-ribose 1-diphosphate: step 2/2. This is Phosphoribosylamine--glycine ligase from Aquifex aeolicus (strain VF5).